Consider the following 124-residue polypeptide: Fluoride-specific ion channel FluC 1 (124 aa).

4 helical membrane-spanning segments follow: residues alanine 7–valine 27, phenylalanine 35–glycine 55, leucine 63–leucine 83, and isoleucine 101–tryptophan 121.

This sequence belongs to the fluoride channel Fluc/FEX (TC 1.A.43) family.

It localises to the cell membrane. It catalyses the reaction fluoride(in) = fluoride(out). In terms of biological role, fluoride-specific ion channel. Important for reducing fluoride concentration in the cell, thus reducing its toxicity. The chain is Fluoride-specific ion channel FluC 1 from Rubrobacter xylanophilus (strain DSM 9941 / JCM 11954 / NBRC 16129 / PRD-1).